The following is a 357-amino-acid chain: Poly(3-hydroxyalkanoate) polymerase subunit PhaE (357 aa).

Residues 320 to 357 (AALAGEEPATKPATALRSPAPAAKAPARRRTTKTNPAD) are disordered. Positions 331-344 (PATALRSPAPAAKA) are enriched in low complexity.

This sequence belongs to the PHA/PHB synthase family. Type III PhaE subfamily. In terms of assembly, a large complex of PhaC and PhaE; the ratio of the subunits has been estimated to be from 1:1 to 4:1, with more PhaE than PhaC.

It is found in the cytoplasm. Its pathway is biopolymer metabolism; poly-(R)-3-hydroxybutanoate biosynthesis. Polymerizes D(-)-3-hydroxybutyryl-CoA to create polyhydroxybutyrate (PHB) which consists of thousands of hydroxybutyrate molecules linked end to end. This subunit has no catalytic activity but enhances the activity of PhaC, the catalytic subunit, 100-fold. The chain is Poly(3-hydroxyalkanoate) polymerase subunit PhaE from Allochromatium vinosum (strain ATCC 17899 / DSM 180 / NBRC 103801 / NCIMB 10441 / D) (Chromatium vinosum).